A 241-amino-acid chain; its full sequence is Ribonuclease HII (241 aa).

Residues 57–241 (NFIAGVDEAG…RTYVEKILKG (185 aa)) form the RNase H type-2 domain. A divalent metal cation-binding residues include D63, E64, and D155.

Belongs to the RNase HII family. It depends on Mn(2+) as a cofactor. Requires Mg(2+) as cofactor.

The protein resides in the cytoplasm. It catalyses the reaction Endonucleolytic cleavage to 5'-phosphomonoester.. Endonuclease that specifically degrades the RNA of RNA-DNA hybrids. This chain is Ribonuclease HII, found in Caldanaerobacter subterraneus subsp. tengcongensis (strain DSM 15242 / JCM 11007 / NBRC 100824 / MB4) (Thermoanaerobacter tengcongensis).